A 279-amino-acid polypeptide reads, in one-letter code: Phosphatidylglycerol--prolipoprotein diacylglyceryl transferase (279 aa).

3 helical membrane passes run 18–38, 55–75, and 89–109; these read LSVR…YFVA, IIFY…VIFQ, and IWHG…AGVI. Arg-137 provides a ligand contact to a 1,2-diacyl-sn-glycero-3-phospho-(1'-sn-glycerol). The next 2 helical transmembrane spans lie at 203-223 and 235-255; these read LGET…FIEG and IRVA…LIVY.

It belongs to the Lgt family.

It localises to the cell membrane. It catalyses the reaction L-cysteinyl-[prolipoprotein] + a 1,2-diacyl-sn-glycero-3-phospho-(1'-sn-glycerol) = an S-1,2-diacyl-sn-glyceryl-L-cysteinyl-[prolipoprotein] + sn-glycerol 1-phosphate + H(+). It functions in the pathway protein modification; lipoprotein biosynthesis (diacylglyceryl transfer). Functionally, catalyzes the transfer of the diacylglyceryl group from phosphatidylglycerol to the sulfhydryl group of the N-terminal cysteine of a prolipoprotein, the first step in the formation of mature lipoproteins. In Staphylococcus aureus (strain USA300), this protein is Phosphatidylglycerol--prolipoprotein diacylglyceryl transferase.